Consider the following 378-residue polypeptide: Endopolygalacturonase I (378 aa).

The signal sequence occupies residues 1-20 (MHLNTTLLVSLALGAASVLA). Positions 21–39 (SPAPPAITAPPTAEEIAKR) are excised as a propeptide. Cys43 and Cys61 are disulfide-bonded. An O-linked (Man...) threonine glycan is attached at Thr44. Residues Ser46, Ser48, Ser52, Ser53, Ser55, Ser57, and Ser62 are each glycosylated (O-linked (Man...) serine). An O-linked (Man...) threonine glycan is attached at Thr63. O-linked (Man...) serine glycosylation is present at Ser73. PbH1 repeat units follow at residues 174 to 204 (SDYL…DIGT), 205 to 226 (STYV…AVNS), 227 to 247 (GENI…SIGS), 256 to 277 (VKNV…RIKT), and 285 to 307 (VSDV…VVQQ). Asp219 acts as the Proton donor in catalysis. The cysteines at positions 221 and 237 are disulfide-linked. Residue His241 is part of the active site. An N-linked (GlcNAc...) asparagine glycan is attached at Asn258. Intrachain disulfides connect Cys345–Cys350 and Cys369–Cys378.

It belongs to the glycosyl hydrolase 28 family.

The protein localises to the secreted. It carries out the reaction (1,4-alpha-D-galacturonosyl)n+m + H2O = (1,4-alpha-D-galacturonosyl)n + (1,4-alpha-D-galacturonosyl)m.. Involved in maceration and soft-rotting of plant tissue. Hydrolyzes the 1,4-alpha glycosidic bonds of de-esterified pectate in the smooth region of the plant cell wall. The sequence is that of Endopolygalacturonase I (pgaI) from Aspergillus aculeatus.